Consider the following 365-residue polypeptide: Green-sensitive opsin P521 (365 aa).

Residues 1-51 lie on the Extracellular side of the membrane; that stretch reads MTEAWNVAVFAARRSRDDDDTTRGSVFTYTNTNNTRGPFEGPNYHIAPRWV. Asn-33 carries an N-linked (GlcNAc...) asparagine glycan. The chain crosses the membrane as a helical span at residues 52-76; it reads YNLVSFFMIIVVIASCFTNGLVLVA. At 77–88 the chain is on the cytoplasmic side; sequence TAKFKKLRHPLN. The chain crosses the membrane as a helical span at residues 89-113; the sequence is WILVNLAFVDLVETLVASTISVFNQ. Topologically, residues 114–128 are extracellular; it reads IFGYFILGHPLCVIE. A disulfide bridge connects residues Cys-125 and Cys-202. A helical transmembrane segment spans residues 129–148; sequence GYVVSSCGITGLWSLAIISW. The Cytoplasmic portion of the chain corresponds to 149-167; that stretch reads ERWFVVCKPFGNIKFDSKL. A helical transmembrane segment spans residues 168–191; that stretch reads AIIGIVFSWVWAWGWSAPPIFGWS. Residues 192–217 are Extracellular-facing; sequence RYWPHGLKTSCGPDVFSGSVELGCQS. The helical transmembrane segment at 218-245 threads the bilayer; that stretch reads FMLTLMITCCFLPLFIIIVCYLQVWMAI. The Cytoplasmic portion of the chain corresponds to 246–267; the sequence is RAVAAQQKESESTQKAEREVSR. Residues 268 to 291 traverse the membrane as a helical segment; the sequence is MVVVMIVAFCICWGPYASFVSFAA. Over 292–299 the chain is Extracellular; sequence ANPGYAFH. A helical membrane pass occupies residues 300–324; the sequence is PLAAALPAYFAKSATIYNPVIYVFM. Lys-311 is modified (N6-(retinylidene)lysine). Over 325–365 the chain is Cytoplasmic; it reads NRQFRNCIMQLFGKKVDDGSEASTTSRTEVSSVSNSSVAPA. A disordered region spans residues 342 to 365; the sequence is DGSEASTTSRTEVSSVSNSSVAPA. The segment covering 345–365 has biased composition (low complexity); sequence EASTTSRTEVSSVSNSSVAPA.

The protein belongs to the G-protein coupled receptor 1 family. Opsin subfamily. In terms of processing, phosphorylated on some or all of the serine and threonine residues present in the C-terminal region. In terms of tissue distribution, in this lizard the color pigments are found in the rod-shaped photoreceptor cells which have been derived from ancestral cone-like photoreceptors.

The protein resides in the membrane. Its function is as follows. Visual pigments are the light-absorbing molecules that mediate vision. They consist of an apoprotein, opsin, covalently linked to cis-retinal. This chain is Green-sensitive opsin P521, found in Gekko gecko (Tokay gecko).